Here is a 433-residue protein sequence, read N- to C-terminus: uncharacterized protein (433 aa).

The protein resides in the virion. This is an uncharacterized protein from Acanthamoeba polyphaga (Amoeba).